The chain runs to 240 residues: Adenosylcobinamide-GDP ribazoletransferase (240 aa).

Transmembrane regions (helical) follow at residues 31-51 (LLYY…ASHL), 62-81 (ALLL…DGLA), 109-129 (IAVV…WVLV), 133-153 (IGAQ…GLFL), and 179-199 (VLLV…LLAL).

Belongs to the CobS family. Requires Mg(2+) as cofactor.

It localises to the cell inner membrane. It carries out the reaction alpha-ribazole + adenosylcob(III)inamide-GDP = adenosylcob(III)alamin + GMP + H(+). The catalysed reaction is alpha-ribazole 5'-phosphate + adenosylcob(III)inamide-GDP = adenosylcob(III)alamin 5'-phosphate + GMP + H(+). It participates in cofactor biosynthesis; adenosylcobalamin biosynthesis; adenosylcobalamin from cob(II)yrinate a,c-diamide: step 7/7. In terms of biological role, joins adenosylcobinamide-GDP and alpha-ribazole to generate adenosylcobalamin (Ado-cobalamin). Also synthesizes adenosylcobalamin 5'-phosphate from adenosylcobinamide-GDP and alpha-ribazole 5'-phosphate. The sequence is that of Adenosylcobinamide-GDP ribazoletransferase from Pseudomonas putida (strain ATCC 47054 / DSM 6125 / CFBP 8728 / NCIMB 11950 / KT2440).